Here is an 827-residue protein sequence, read N- to C-terminus: Endoribonuclease YSH1 (827 aa).

The Zn(2+) site is built by H96, H98, D100, H101, H184, and D205. The active-site Proton donor is the H426. A Zn(2+)-binding site is contributed by H448. The segment covering 583–592 (EDDVAEEEED) has biased composition (acidic residues). Disordered stretches follow at residues 583-621 (EDDV…KEEE) and 802-827 (DREE…KEEE). Basic and acidic residues predominate over residues 606-621 (GEVKDETAEEVKKEEE).

This sequence belongs to the metallo-beta-lactamase superfamily. RNA-metabolizing metallo-beta-lactamase-like family. CPSF2/YSH1 subfamily.

Its subcellular location is the nucleus. In terms of biological role, component of the cleavage factor I (CF I) involved in pre-mRNA 3'-end processing. The protein is Endoribonuclease YSH1 (YSH1) of Yarrowia lipolytica (strain CLIB 122 / E 150) (Yeast).